Reading from the N-terminus, the 336-residue chain is Acetaldehyde dehydrogenase 1 (336 aa).

32-35 (SGVV) contributes to the NAD(+) binding site. Residue C150 is the Acyl-thioester intermediate of the active site. N309 contacts NAD(+).

Belongs to the acetaldehyde dehydrogenase family.

It carries out the reaction acetaldehyde + NAD(+) + CoA = acetyl-CoA + NADH + H(+). The chain is Acetaldehyde dehydrogenase 1 (mhpF) from Mycobacterium ulcerans (strain Agy99).